We begin with the raw amino-acid sequence, 108 residues long: MATRLANVPQREAGTILERKEQALKPPAMFKVVLLNDDYTPMEFVVMILQQYFSRDRETATQIMLTVHREGKGVCGIYTRDIAATKVELVSTHARQAGHPLQCVMEEA.

The protein belongs to the ClpS family. Binds to the N-terminal domain of the chaperone ClpA.

Its function is as follows. Involved in the modulation of the specificity of the ClpAP-mediated ATP-dependent protein degradation. The chain is ATP-dependent Clp protease adapter protein ClpS from Cupriavidus necator (strain ATCC 17699 / DSM 428 / KCTC 22496 / NCIMB 10442 / H16 / Stanier 337) (Ralstonia eutropha).